The following is a 211-amino-acid chain: Redox-sensing transcriptional repressor Rex (211 aa).

The H-T-H motif DNA-binding region spans 17–56; sequence LYYRLVSILKGKGIDRVNSKTISEALQIDSATIRRDFSYF. 91–96 serves as a coordination point for NAD(+); sequence GIGNLG.

Belongs to the transcriptional regulatory Rex family. In terms of assembly, homodimer.

The protein resides in the cytoplasm. Its function is as follows. Modulates transcription in response to changes in cellular NADH/NAD(+) redox state. The protein is Redox-sensing transcriptional repressor Rex of Staphylococcus epidermidis (strain ATCC 12228 / FDA PCI 1200).